The chain runs to 180 residues: Large ribosomal subunit protein uL6 (180 aa).

This sequence belongs to the universal ribosomal protein uL6 family. As to quaternary structure, part of the 50S ribosomal subunit.

Functionally, this protein binds to the 23S rRNA, and is important in its secondary structure. It is located near the subunit interface in the base of the L7/L12 stalk, and near the tRNA binding site of the peptidyltransferase center. The polypeptide is Large ribosomal subunit protein uL6 (Caldanaerobacter subterraneus subsp. tengcongensis (strain DSM 15242 / JCM 11007 / NBRC 100824 / MB4) (Thermoanaerobacter tengcongensis)).